The following is a 67-amino-acid chain: ORF2p protein (67 aa).

Residues 13–18 (WIGHPV) form an important for viral replication in intestinal cells region. Positions 22-38 (AIIYPFVGFIPLSLKEV) form a transmembrane segment.

It is found in the host cytoplasmic vesicle membrane. Functionally, facilitates virus release from intestinal cells in vitro, possibly through the host autophagic pathway. This Homo sapiens (Human) protein is ORF2p protein.